The primary structure comprises 247 residues: Phosphoribosylaminoimidazole-succinocarboxamide synthase (247 aa).

Belongs to the SAICAR synthetase family.

The enzyme catalyses 5-amino-1-(5-phospho-D-ribosyl)imidazole-4-carboxylate + L-aspartate + ATP = (2S)-2-[5-amino-1-(5-phospho-beta-D-ribosyl)imidazole-4-carboxamido]succinate + ADP + phosphate + 2 H(+). It participates in purine metabolism; IMP biosynthesis via de novo pathway; 5-amino-1-(5-phospho-D-ribosyl)imidazole-4-carboxamide from 5-amino-1-(5-phospho-D-ribosyl)imidazole-4-carboxylate: step 1/2. The sequence is that of Phosphoribosylaminoimidazole-succinocarboxamide synthase from Prochlorococcus marinus (strain NATL1A).